Here is a 139-residue protein sequence, read N- to C-terminus: Plastocyanin (139 aa).

Residues Met-1 to Ala-34 form the signal peptide. In terms of domain architecture, Plastocyanin-like spans Glu-35–Gly-139. Residues His-73, Cys-123, His-126, and Met-131 each contribute to the Cu cation site.

It belongs to the plastocyanin family. Cu(2+) serves as cofactor.

It is found in the cellular thylakoid membrane. In terms of biological role, participates in electron transfer between P700 and the cytochrome b6-f complex in photosystem I. The chain is Plastocyanin from Nostoc punctiforme (strain ATCC 29133 / PCC 73102).